A 281-amino-acid polypeptide reads, in one-letter code: Auxin-responsive protein IAA19 (281 aa).

Residues L40 to L44 carry the EAR-like (transcriptional repression) motif. The interval L66–A126 is disordered. Positions G79–R91 are enriched in basic and acidic residues. Residues G114–A126 show a composition bias toward low complexity. Positions C161 to D265 constitute a PB1 domain.

It belongs to the Aux/IAA family. In terms of assembly, homodimers and heterodimers. In terms of tissue distribution, expressed in etiolated seedlings and flowers.

The protein resides in the nucleus. Functionally, aux/IAA proteins are short-lived transcriptional factors that function as repressors of early auxin response genes at low auxin concentrations. This Oryza sativa subsp. japonica (Rice) protein is Auxin-responsive protein IAA19 (IAA19).